Consider the following 243-residue polypeptide: Cytochrome c oxidase subunit 2 (243 aa).

The Mitochondrial intermembrane portion of the chain corresponds to 1–34 (MNNIIHNDAPTPWGIYFQDGASPVYDGIVELHDQ). The chain crosses the membrane as a helical span at residues 35–55 (VLFYLLIVLVGVSWILFSTIL). At 56 to 74 (RFRGSGIVHKYHNHSTTIE) the chain is on the mitochondrial matrix side. Residues 75 to 97 (FVWTVSPALLLIAIAFPSFKLLY) form a helical membrane-spanning segment. Over 98–243 (LMDEVIDPSI…EKFLSWLDNQ (146 aa)) the chain is Mitochondrial intermembrane. Positions 178, 213, 215, 217, 221, and 224 each coordinate Cu cation. Glutamate 215 serves as a coordination point for Mg(2+).

It belongs to the cytochrome c oxidase subunit 2 family. Component of the cytochrome c oxidase (complex IV, CIV), a multisubunit enzyme composed of a catalytic core of 3 subunits and several supernumerary subunits. The complex exists as a monomer or a dimer and forms supercomplexes (SCs) in the inner mitochondrial membrane with ubiquinol-cytochrome c oxidoreductase (cytochrome b-c1 complex, complex III, CIII). Requires Cu cation as cofactor.

The protein localises to the mitochondrion inner membrane. The catalysed reaction is 4 Fe(II)-[cytochrome c] + O2 + 8 H(+)(in) = 4 Fe(III)-[cytochrome c] + 2 H2O + 4 H(+)(out). Component of the cytochrome c oxidase, the last enzyme in the mitochondrial electron transport chain which drives oxidative phosphorylation. The respiratory chain contains 3 multisubunit complexes succinate dehydrogenase (complex II, CII), ubiquinol-cytochrome c oxidoreductase (cytochrome b-c1 complex, complex III, CIII) and cytochrome c oxidase (complex IV, CIV), that cooperate to transfer electrons derived from NADH and succinate to molecular oxygen, creating an electrochemical gradient over the inner membrane that drives transmembrane transport and the ATP synthase. Cytochrome c oxidase is the component of the respiratory chain that catalyzes the reduction of oxygen to water. Electrons originating from reduced cytochrome c in the intermembrane space (IMS) are transferred via the dinuclear copper A center (CU(A)) of subunit 2 and heme A of subunit 1 to the active site in subunit 1, a binuclear center (BNC) formed by heme A3 and copper B (CU(B)). The BNC reduces molecular oxygen to 2 water molecules using 4 electrons from cytochrome c in the IMS and 4 protons from the mitochondrial matrix. The polypeptide is Cytochrome c oxidase subunit 2 (Pneumocystis carinii).